The sequence spans 85 residues: MAKTQSPLQWLATTLIRGYQVFISPFLGANKCRFHPTCSTYAIEAIRLHGFAKGSWLAARRILKCHPLHPGGIDPVPPKKHRCNK.

This sequence belongs to the UPF0161 family.

It is found in the cell inner membrane. Could be involved in insertion of integral membrane proteins into the membrane. This Shewanella sediminis (strain HAW-EB3) protein is Putative membrane protein insertion efficiency factor.